A 266-amino-acid chain; its full sequence is ATP synthase subunit a (266 aa).

Helical transmembrane passes span I41 to A61, V98 to L118, V119 to L139, L152 to L172, H178 to A198, L216 to W236, and A237 to V257.

This sequence belongs to the ATPase A chain family. F-type ATPases have 2 components, CF(1) - the catalytic core - and CF(0) - the membrane proton channel. CF(1) has five subunits: alpha(3), beta(3), gamma(1), delta(1), epsilon(1). CF(0) has three main subunits: a(1), b(2) and c(9-12). The alpha and beta chains form an alternating ring which encloses part of the gamma chain. CF(1) is attached to CF(0) by a central stalk formed by the gamma and epsilon chains, while a peripheral stalk is formed by the delta and b chains.

It is found in the cell inner membrane. Key component of the proton channel; it plays a direct role in the translocation of protons across the membrane. The sequence is that of ATP synthase subunit a from Halorhodospira halophila (strain DSM 244 / SL1) (Ectothiorhodospira halophila (strain DSM 244 / SL1)).